An 86-amino-acid chain; its full sequence is uncharacterized protein (86 aa).

The signal sequence occupies residues 1-22 (MKTINTVVAAMALSTLSFGVFA).

It belongs to the BhsA/McbA family.

It is found in the periplasm. This is an uncharacterized protein from Escherichia coli O6:H1 (strain CFT073 / ATCC 700928 / UPEC).